The sequence spans 377 residues: Tubulin--tyrosine ligase (377 aa).

Residues 3 to 370 (TFVVRDENSS…PPDVEQPQTQ (368 aa)) form the TTL domain.

This sequence belongs to the tubulin--tyrosine ligase family. In terms of assembly, monomer. It depends on Mg(2+) as a cofactor. The cofactor is K(+).

The catalysed reaction is C-terminal L-alpha-aminoacyl-L-glutamyl-L-glutamyl-[tubulin] + L-tyrosine + ATP = C-terminal L-alpha-aminoacyl-L-glutamyl-L-glutamyl-L-tyrosyl-[tubulin] + ADP + phosphate + H(+). Functionally, catalyzes the post-translational addition of a tyrosine to the C-terminal end of detyrosinated alpha-tubulin. This Homo sapiens (Human) protein is Tubulin--tyrosine ligase (TTL).